We begin with the raw amino-acid sequence, 476 residues long: Sulfate adenylyltransferase subunit 1 (476 aa).

The tr-type G domain maps to 17-232; the sequence is KDLLRLLTAG…LETVHIDSDN (216 aa). The interval 26 to 33 is G1; the sequence is GSVDDGKS. 26–33 contributes to the GTP binding site; it reads GSVDDGKS. Positions 84–88 are G2; sequence GITID. The interval 105-108 is G3; that stretch reads DTPG. GTP contacts are provided by residues 105–109 and 160–163; these read DTPGH and NKMD. Residues 160 to 163 are G4; that stretch reads NKMD. A G5 region spans residues 197-199; the sequence is SAL.

Belongs to the TRAFAC class translation factor GTPase superfamily. Classic translation factor GTPase family. CysN/NodQ subfamily. In terms of assembly, heterodimer composed of CysD, the smaller subunit, and CysN.

It catalyses the reaction sulfate + ATP + H(+) = adenosine 5'-phosphosulfate + diphosphate. It functions in the pathway sulfur metabolism; hydrogen sulfide biosynthesis; sulfite from sulfate: step 1/3. Functionally, with CysD forms the ATP sulfurylase (ATPS) that catalyzes the adenylation of sulfate producing adenosine 5'-phosphosulfate (APS) and diphosphate, the first enzymatic step in sulfur assimilation pathway. APS synthesis involves the formation of a high-energy phosphoric-sulfuric acid anhydride bond driven by GTP hydrolysis by CysN coupled to ATP hydrolysis by CysD. In Bacteroides fragilis (strain YCH46), this protein is Sulfate adenylyltransferase subunit 1.